We begin with the raw amino-acid sequence, 455 residues long: Bifunctional protein GlmU (455 aa).

A pyrophosphorylase region spans residues 1 to 227 (MDSLSIVILA…SWEAAGVNNK (227 aa)). UDP-N-acetyl-alpha-D-glucosamine contacts are provided by residues 9 to 12 (LAAG), Lys-23, Gln-74, 79 to 80 (GT), 101 to 103 (YGD), Gly-137, Glu-152, Asn-167, and Asn-225. Asp-103 serves as a coordination point for Mg(2+). A Mg(2+)-binding site is contributed by Asn-225. The segment at 228–248 (VQLAELERILQANQARALLEA) is linker. Residues 249–455 (GVTLADPARI…GWKRPQKKSG (207 aa)) are N-acetyltransferase. 2 residues coordinate UDP-N-acetyl-alpha-D-glucosamine: Arg-331 and Lys-349. Residue His-361 is the Proton acceptor of the active site. Residues Tyr-364 and Asn-375 each coordinate UDP-N-acetyl-alpha-D-glucosamine. Residues Ala-378, 384–385 (NY), Ser-403, Ala-421, and Arg-438 each bind acetyl-CoA.

The protein in the N-terminal section; belongs to the N-acetylglucosamine-1-phosphate uridyltransferase family. This sequence in the C-terminal section; belongs to the transferase hexapeptide repeat family. In terms of assembly, homotrimer. Mg(2+) is required as a cofactor.

The protein localises to the cytoplasm. The catalysed reaction is alpha-D-glucosamine 1-phosphate + acetyl-CoA = N-acetyl-alpha-D-glucosamine 1-phosphate + CoA + H(+). It catalyses the reaction N-acetyl-alpha-D-glucosamine 1-phosphate + UTP + H(+) = UDP-N-acetyl-alpha-D-glucosamine + diphosphate. It functions in the pathway nucleotide-sugar biosynthesis; UDP-N-acetyl-alpha-D-glucosamine biosynthesis; N-acetyl-alpha-D-glucosamine 1-phosphate from alpha-D-glucosamine 6-phosphate (route II): step 2/2. Its pathway is nucleotide-sugar biosynthesis; UDP-N-acetyl-alpha-D-glucosamine biosynthesis; UDP-N-acetyl-alpha-D-glucosamine from N-acetyl-alpha-D-glucosamine 1-phosphate: step 1/1. It participates in bacterial outer membrane biogenesis; LPS lipid A biosynthesis. Its function is as follows. Catalyzes the last two sequential reactions in the de novo biosynthetic pathway for UDP-N-acetylglucosamine (UDP-GlcNAc). The C-terminal domain catalyzes the transfer of acetyl group from acetyl coenzyme A to glucosamine-1-phosphate (GlcN-1-P) to produce N-acetylglucosamine-1-phosphate (GlcNAc-1-P), which is converted into UDP-GlcNAc by the transfer of uridine 5-monophosphate (from uridine 5-triphosphate), a reaction catalyzed by the N-terminal domain. The protein is Bifunctional protein GlmU of Chromobacterium violaceum (strain ATCC 12472 / DSM 30191 / JCM 1249 / CCUG 213 / NBRC 12614 / NCIMB 9131 / NCTC 9757 / MK).